The primary structure comprises 110 residues: Parvalbumin alpha (110 aa).

EF-hand domains are found at residues 39–74 (KNAK…FAPE) and 78–110 (LSEK…VANS). The Ca(2+) site is built by Asp52, Asp54, Ser56, Phe58, Glu60, Glu63, Asp91, Asp93, Asp95, Lys97, and Glu102.

It belongs to the parvalbumin family.

Its function is as follows. In muscle, parvalbumin is thought to be involved in relaxation after contraction. It binds two calcium ions. In Callorhinchus milii (Ghost shark), this protein is Parvalbumin alpha.